The following is a 38-amino-acid chain: Augerpeptide hhe53 (38 aa).

In terms of processing, contains 2 disulfide bonds. In terms of tissue distribution, expressed by the venom duct.

Its subcellular location is the secreted. The sequence is that of Augerpeptide hhe53 from Hastula hectica (Sea snail).